A 679-amino-acid chain; its full sequence is Methionine--tRNA ligase (679 aa).

The short motif at 14 to 24 (PYANGSIHLGH) is the 'HIGH' region element. 4 residues coordinate Zn(2+): Cys-145, Cys-148, Cys-158, and Cys-161. A 'KMSKS' region motif is present at residues 331-335 (KMSKS). Position 334 (Lys-334) interacts with ATP. Residues 577 to 679 (TFAAVDLRVA…SGAKPGQRIK (103 aa)) enclose the tRNA-binding domain.

This sequence belongs to the class-I aminoacyl-tRNA synthetase family. MetG type 1 subfamily. In terms of assembly, homodimer. Zn(2+) serves as cofactor.

The protein resides in the cytoplasm. It carries out the reaction tRNA(Met) + L-methionine + ATP = L-methionyl-tRNA(Met) + AMP + diphosphate. Is required not only for elongation of protein synthesis but also for the initiation of all mRNA translation through initiator tRNA(fMet) aminoacylation. This is Methionine--tRNA ligase from Pseudomonas entomophila (strain L48).